The sequence spans 293 residues: Glycine N-methyltransferase (293 aa).

Val2 carries the post-translational modification N-acetylvaline. (6S)-5-methyl-5,6,7,8-tetrahydrofolate contacts are provided by Ser4 and Tyr6. The residue at position 10 (Ser10) is a Phosphoserine. S-adenosyl-L-methionine is bound by residues Tyr22, Trp31, Tyr34, and Arg41. A Phosphotyrosine modification is found at Tyr34. Lys46 bears the N6-succinyllysine mark. S-adenosyl-L-methionine-binding positions include Ala65, Asp86–Ser88, Asn117–Trp118, Leu137–Ser140, and Arg176. Residues Lys191, Lys196, and Lys201 each carry the N6-succinyllysine modification. Residue His215 coordinates (6S)-5-methyl-5,6,7,8-tetrahydrofolate. Tyr221 provides a ligand contact to S-adenosyl-L-methionine. Arg240 provides a ligand contact to (6S)-5-methyl-5,6,7,8-tetrahydrofolate.

This sequence belongs to the class I-like SAM-binding methyltransferase superfamily. Glycine N-methyltransferase family. In terms of assembly, homotetramer. As to expression, abundant in liver.

Its subcellular location is the cytoplasm. The catalysed reaction is glycine + S-adenosyl-L-methionine = sarcosine + S-adenosyl-L-homocysteine + H(+). With respect to regulation, inhibited by 5-methyltetrahydrofolate monoglutamate and by 5-methyltetrahydrofolate pentaglutamate, inhibition is much more effective by the pentaglutamate form than by the monoglutamate form. Two molecules of 5-methyltetrahydrofolate are bound per tetramer. The binding sites are localized between subunits. Inhibitor binding may preclude movements of the polypeptide chain that are necessary for enzyme activity. Its function is as follows. Catalyzes the methylation of glycine by using S-adenosylmethionine (AdoMet) to form N-methylglycine (sarcosine) with the concomitant production of S-adenosylhomocysteine (AdoHcy), a reaction regulated by the binding of 5-methyltetrahydrofolate. Possible crucial role in the regulation of tissue concentration of AdoMet and of metabolism of methionine. The sequence is that of Glycine N-methyltransferase (Gnmt) from Rattus norvegicus (Rat).